Here is a 345-residue protein sequence, read N- to C-terminus: Ferrochelatase (345 aa).

Fe cation contacts are provided by H215 and E296.

It belongs to the ferrochelatase family.

Its subcellular location is the cytoplasm. It carries out the reaction heme b + 2 H(+) = protoporphyrin IX + Fe(2+). It participates in porphyrin-containing compound metabolism; protoheme biosynthesis; protoheme from protoporphyrin-IX: step 1/1. In terms of biological role, catalyzes the ferrous insertion into protoporphyrin IX. The protein is Ferrochelatase of Rhodopseudomonas palustris (strain HaA2).